Consider the following 260-residue polypeptide: Dolichol-phosphate mannosyltransferase subunit 1 (260 aa).

At Ala-2 the chain carries N-acetylalanine. 2 positions are modified to phosphoserine: Ser-3 and Ser-9. The GDP-alpha-D-mannose site is built by Pro-32, Tyr-34, Glu-36, Ile-63, Asp-65, Asp-118, Ala-119, Asp-120, Arg-147, Arg-234, and Lys-240. Residue Asp-120 participates in Mg(2+) binding. Asp-120 contacts Mn(2+).

This sequence belongs to the glycosyltransferase 2 family. As to quaternary structure, component of the dolichol-phosphate mannose (DPM) synthase complex composed of DPM1, DPM2 and DPM3; within the complex, directly interacts with DPM3. This interaction stabilizes DPM1. Requires Mg(2+) as cofactor. Mn(2+) serves as cofactor. It depends on Ca(2+) as a cofactor.

It is found in the endoplasmic reticulum. The catalysed reaction is a di-trans,poly-cis-dolichyl phosphate + GDP-alpha-D-mannose = a di-trans,poly-cis-dolichyl beta-D-mannosyl phosphate + GDP. It participates in protein modification; protein glycosylation. Its function is as follows. Transfers mannose from GDP-mannose to dolichol monophosphate to form dolichol phosphate mannose (Dol-P-Man) which is the mannosyl donor in pathways leading to N-glycosylation, glycosyl phosphatidylinositol membrane anchoring, and O-mannosylation of proteins; catalytic subunit of the dolichol-phosphate mannose (DPM) synthase complex. The polypeptide is Dolichol-phosphate mannosyltransferase subunit 1 (DPM1) (Homo sapiens (Human)).